The chain runs to 662 residues: DNA ligase (662 aa).

NAD(+) contacts are provided by residues 31–35 and 79–80; these read DKDYD and SL. Catalysis depends on Lys121, which acts as the N6-AMP-lysine intermediate. NAD(+) is bound by residues Arg143, Glu177, and Lys313. The Zn(2+) site is built by Cys406, Cys409, Cys422, and Cys428. In terms of domain architecture, BRCT spans 586 to 662; sequence VLESPFMGKT…LSEEEFENMI (77 aa).

The protein belongs to the NAD-dependent DNA ligase family. LigA subfamily. It depends on Mg(2+) as a cofactor. The cofactor is Mn(2+).

It catalyses the reaction NAD(+) + (deoxyribonucleotide)n-3'-hydroxyl + 5'-phospho-(deoxyribonucleotide)m = (deoxyribonucleotide)n+m + AMP + beta-nicotinamide D-nucleotide.. DNA ligase that catalyzes the formation of phosphodiester linkages between 5'-phosphoryl and 3'-hydroxyl groups in double-stranded DNA using NAD as a coenzyme and as the energy source for the reaction. It is essential for DNA replication and repair of damaged DNA. The protein is DNA ligase of Clostridium perfringens (strain 13 / Type A).